A 508-amino-acid polypeptide reads, in one-letter code: MSNKEIEDNEDVWKERCMNCIRCNDEKNCGTCWPCRNGKTCDMRKCFSAKRLYNEKVKRQTDENLKAIMAKTAQREAAHQAATTTAPSAPVVIEQQVEKKKRGRKKGSGNGGAAAAAQQRKANIINERDYVPNRPTRQQSADLRRKRTQLNAEPDKHPRQCLNPNCIYESRIDSKYCSDECGKELARMRLTEILPNRCKQYFFEGPSGGPRSLEDEIKPKRAKINREVQKLTESEKNMMAFLNKLVEFIKTQLKLQPLGTEERYDDNLYEGCIVCGLPDIPLLKYTKHIELCWARSEKAISFGAPEKNNDMFYCEKYDSRTNSFCKRLKSLCPEHRKLGDEQHLKVCGYPKKWEDGMIETAKTVSELIEMEDPFGEEGCRTKKDACHKHHKWIPSLRGTIELEQACLFQKMYELCHEMHKLNAHAEWTTNALSIMMHKQPNIIDSEQMSLFNKSQSTSSSASAHGATTPISSTSSSSSSSSKNDDEMEDTAEFLANLAVQKEEETQNN.

The CXXC-type zinc-finger motif lies at 10 to 47 (EDVWKERCMNCIRCNDEKNCGTCWPCRNGKTCDMRKCF). Disordered stretches follow at residues 95–156 (QQVE…EPDK) and 453–508 (KSQS…TQNN). Composition is skewed to low complexity over residues 113–123 (AAAAAQQRKAN) and 454–481 (SQSTSSSASAHGATTPISSTSSSSSSSS).

Component of the SET2 complex (also known as the SET1/COMPASS complex), which contains at least set-2, swd-2.1, cfp-1, rbbp-5, wdr-5.1, dpy-30 and ash-2. Within the complex, interacts with wdr-5.1, ash-2 and dpy-30. Also interacts with the SIN3S complex, which contains at least sin-3, hda-1, athp-1 and mrg-1. Interacts with sin-3, hda-1 and mrg-1.

It localises to the nucleus. Functionally, transcriptional activator that exhibits a unique DNA binding specificity for CpG motifs; enriched at promoters containing the trimethylation mark on histone H3 'Lys-4' (H3K4me3). Forms part of the SET2 complex and interacts with the SIN3S HDAC complex at promoters. Required for H3K4 trimethylation and plays a repressive role in the expression of heat shock and salt-inducible genes. Required for fertility, in cooperation with class I histone deacetylases (HDACs). In Caenorhabditis elegans, this protein is CXXC-type zinc finger protein 1.